A 113-amino-acid polypeptide reads, in one-letter code: Molt-inhibiting hormone (113 aa).

The N-terminal stretch at 1–35 (MMSLAHSKFSCQRTRLLAVVLLAALWSSSLQQAAA) is a signal peptide. Disulfide bonds link C42/C79, C59/C75, and C62/C88.

It belongs to the arthropod CHH/MIH/GIH/VIH hormone family.

The protein resides in the secreted. In terms of biological role, inhibits Y-organs where molting hormone (ecdysteroid) is secreted. A molting cycle is initiated when MIH secretion diminishes or stops. This chain is Molt-inhibiting hormone, found in Callinectes sapidus (Blue crab).